A 32-amino-acid chain; its full sequence is Photosystem II reaction center protein Z (32 aa).

A helical transmembrane segment spans residues 9–29 (IIFSGSLIWVFLLIIVGFLNY).

The protein belongs to the PsbZ family. As to quaternary structure, PSII is composed of 1 copy each of membrane proteins PsbA, PsbB, PsbC, PsbD, PsbE, PsbF, PsbH, PsbI, PsbJ, PsbK, PsbL, PsbM, PsbT, PsbY, PsbZ, Psb30/Ycf12, at least 3 peripheral proteins of the oxygen-evolving complex and a large number of cofactors. It forms dimeric complexes.

Its subcellular location is the plastid. It is found in the chloroplast thylakoid membrane. May control the interaction of photosystem II (PSII) cores with the light-harvesting antenna, regulates electron flow through the 2 photosystem reaction centers. PSII is a light-driven water plastoquinone oxidoreductase, using light energy to abstract electrons from H(2)O, generating a proton gradient subsequently used for ATP formation. The sequence is that of Photosystem II reaction center protein Z from Euglena myxocylindracea.